A 407-amino-acid polypeptide reads, in one-letter code: Queuine tRNA-ribosyltransferase-like protein (407 aa).

It belongs to the queuine tRNA-ribosyltransferase family.

This Plasmodium falciparum (isolate 3D7) protein is Queuine tRNA-ribosyltransferase-like protein.